The sequence spans 468 residues: Glycosyl hydrolase family 109 protein (468 aa).

The N-terminal stretch at 1 to 19 (MVYKVFLSLCIGLALSASA) is a signal peptide. NAD(+) is bound by residues 67-68 (MR), D89, 138-141 (WKTH), 158-159 (EV), and N187. Residues Y216, R232, 244–247 (YATH), and Y322 contribute to the substrate site. Y244 provides a ligand contact to NAD(+).

It belongs to the Gfo/Idh/MocA family. Glycosyl hydrolase 109 subfamily. NAD(+) serves as cofactor.

Functionally, glycosidase. The chain is Glycosyl hydrolase family 109 protein from Porphyromonas gingivalis (strain ATCC BAA-308 / W83).